Here is a 486-residue protein sequence, read N- to C-terminus: Protein DETOXIFICATION 27 (486 aa).

The disordered stretch occupies residues 1-25 (MRGGDGEEGSESRVALLKSPHTAEE). 12 helical membrane-spanning segments follow: residues 41–61 (LWQIVGPAIFSRVTTYSMLVI), 74–94 (LAAISIVNNVTVGFNFGLLLG), 124–144 (IVLFFCCVLLLPTYIFTTPVL), 153–173 (IAELSGVVAIWVIPLHFAFTL), 189–209 (VTAYAAAVALVVHILVCWLFV), 216–236 (VVGTVATISISWWVNVLILLV), 269–289 (GVMLCLENWYYRILIIMTGNL), 299–319 (LSICMAINGWEMMIPLAFFAG), 349–369 (IIGLFFWVLIMLLHNQIAWIF), 384–404 (LLLAFTVLLNSVQPVLSGVAV), 407–427 (GWQSYVAYINLGCYYCIGVPL), and 439–461 (VMGIWGGMIFGGTAVQTMILSFI).

This sequence belongs to the multi antimicrobial extrusion (MATE) (TC 2.A.66.1) family.

It localises to the membrane. This chain is Protein DETOXIFICATION 27, found in Arabidopsis thaliana (Mouse-ear cress).